A 555-amino-acid chain; its full sequence is Hydrogenase-4 component G (555 aa).

This sequence belongs to the complex I 49 kDa subunit family. [4Fe-4S] cluster serves as cofactor.

Its function is as follows. Possible component of hydrogenase 4. This is Hydrogenase-4 component G from Escherichia coli (strain K12).